The following is a 336-amino-acid chain: Ribosomal RNA large subunit methyltransferase F (336 aa).

This sequence belongs to the methyltransferase superfamily. METTL16/RlmF family.

It localises to the cytoplasm. It catalyses the reaction adenosine(1618) in 23S rRNA + S-adenosyl-L-methionine = N(6)-methyladenosine(1618) in 23S rRNA + S-adenosyl-L-homocysteine + H(+). In terms of biological role, specifically methylates the adenine in position 1618 of 23S rRNA. The polypeptide is Ribosomal RNA large subunit methyltransferase F (Yersinia pestis bv. Antiqua (strain Angola)).